The following is a 276-amino-acid chain: Pyridinium-3,5-bisthiocarboxylic acid mononucleotide synthase (276 aa).

Cys-176 functions as the Nucleophile and sulfur donor in the catalytic mechanism. At Cys-176 the chain carries 2,3-didehydroalanine (Cys).

Belongs to the LarE family.

The enzyme catalyses pyridinium-3,5-dicarboxylate mononucleotide + [LarE protein]-L-cysteine + ATP = [LarE protein]-dehydroalanine + pyridinium-3-carboxylate-5-thiocarboxylate mononucleotide + AMP + diphosphate + H(+). The catalysed reaction is [LarE protein]-L-cysteine + pyridinium-3-carboxylate-5-thiocarboxylate mononucleotide + ATP = pyridinium-3,5-bisthiocarboxylate mononucleotide + [LarE protein]-dehydroalanine + AMP + diphosphate + H(+). Functionally, involved in the biosynthesis of a nickel-pincer cofactor ((SCS)Ni(II) pincer complex). Catalyzes the ATP-dependent incorporation of two sulfur atoms in pyridinium-3,5-biscarboxylic acid mononucleotide (P2CMN) to yield pyridinium-3,5-bisthiocarboxylic acid mononucleotide (P2TMN). The source of sulfur is the enzyme itself: Cys-176 of LarE is the sulfur donor, thereby being converted into dehydroalanine, and is not regenerated in vivo. Thus, two molecules of LarE undergo sacrificial sulfur transfer to create one P2TMN. Binds nickel. Is required for the activation of the lactate racemase LarA. May also be involved in the activation of other nickel-pincer cofactor-dependent enzymes. The sequence is that of Pyridinium-3,5-bisthiocarboxylic acid mononucleotide synthase from Lactiplantibacillus plantarum (strain ATCC BAA-793 / NCIMB 8826 / WCFS1) (Lactobacillus plantarum).